The chain runs to 214 residues: Pyridoxine/pyridoxamine 5'-phosphate oxidase (214 aa).

Residues 8–11 and lysine 66 contribute to the substrate site; that span reads RINY. Residues 61-66, 76-77, arginine 82, lysine 83, and glutamine 105 contribute to the FMN site; these read RIVLIK and FT. Tyrosine 123, arginine 127, and serine 131 together coordinate substrate. FMN is bound by residues 140–141 and tryptophan 184; that span reads QS. 190–192 is a binding site for substrate; the sequence is RLH. FMN is bound at residue arginine 194.

The protein belongs to the pyridoxamine 5'-phosphate oxidase family. As to quaternary structure, homodimer. The cofactor is FMN.

The enzyme catalyses pyridoxamine 5'-phosphate + O2 + H2O = pyridoxal 5'-phosphate + H2O2 + NH4(+). It catalyses the reaction pyridoxine 5'-phosphate + O2 = pyridoxal 5'-phosphate + H2O2. It participates in cofactor metabolism; pyridoxal 5'-phosphate salvage; pyridoxal 5'-phosphate from pyridoxamine 5'-phosphate: step 1/1. Its pathway is cofactor metabolism; pyridoxal 5'-phosphate salvage; pyridoxal 5'-phosphate from pyridoxine 5'-phosphate: step 1/1. Its function is as follows. Catalyzes the oxidation of either pyridoxine 5'-phosphate (PNP) or pyridoxamine 5'-phosphate (PMP) into pyridoxal 5'-phosphate (PLP). The chain is Pyridoxine/pyridoxamine 5'-phosphate oxidase from Burkholderia lata (strain ATCC 17760 / DSM 23089 / LMG 22485 / NCIMB 9086 / R18194 / 383).